We begin with the raw amino-acid sequence, 66 residues long: DNA-directed RNA polymerase subunit Rpo10 (66 aa).

Residues Cys7, Cys10, Cys44, and Cys45 each coordinate Zn(2+).

It belongs to the archaeal Rpo10/eukaryotic RPB10 RNA polymerase subunit family. As to quaternary structure, part of the RNA polymerase complex. Zn(2+) serves as cofactor.

Its subcellular location is the cytoplasm. The catalysed reaction is RNA(n) + a ribonucleoside 5'-triphosphate = RNA(n+1) + diphosphate. DNA-dependent RNA polymerase (RNAP) catalyzes the transcription of DNA into RNA using the four ribonucleoside triphosphates as substrates. This chain is DNA-directed RNA polymerase subunit Rpo10, found in Hyperthermus butylicus (strain DSM 5456 / JCM 9403 / PLM1-5).